The sequence spans 86 residues: Class II hydrophobin 2 (86 aa).

Positions 1 to 15 (MQFFAVALFATSALA) are cleaved as a signal peptide. 4 cysteine pairs are disulfide-bonded: C18/C67, C28/C58, C29/C41, and C68/C79.

This sequence belongs to the cerato-ulmin hydrophobin family. As to quaternary structure, homodimer. Homodimers further self-assemble to form highly ordered films at water-air interfaces through intermolecular interactions.

The protein localises to the secreted. The protein resides in the spore wall. Its subcellular location is the cell wall. Aerial growth, conidiation, and dispersal of filamentous fungi in the environment rely upon a capability of their secreting small amphipathic proteins called hydrophobins (HPBs) with low sequence identity. Class I can self-assemble into an outermost layer of rodlet bundles on aerial cell surfaces, conferring cellular hydrophobicity that supports fungal growth, development and dispersal; whereas Class II form highly ordered films at water-air interfaces through intermolecular interactions but contribute nothing to the rodlet structure. Hbf2 is a class II hydrophobin that is involved in sporuration. The protein is Class II hydrophobin 2 of Hypocrea jecorina (Trichoderma reesei).